A 417-amino-acid polypeptide reads, in one-letter code: uncharacterized protein (417 aa).

10 helical membrane-spanning segments follow: residues 21-41 (ISSL…AFQL), 50-70 (LLMM…GLLA), 88-108 (LTVI…LLSV), 166-186 (SVFY…FFLP), 217-237 (MPLL…LQIG), 255-275 (LAGW…AITG), 283-303 (LLYF…APFL), 308-328 (IAGI…FGLV), 351-371 (AIQS…GVLA), and 373-393 (WIGV…IGLI).

Belongs to the major facilitator superfamily. TCR/Tet family.

The protein resides in the cell membrane. This is an uncharacterized protein from Bacillus subtilis (strain 168).